The chain runs to 124 residues: Small ribosomal subunit protein uS12 (124 aa).

Positions 1–22 are disordered; sequence MATINQLVRKPRSRKVAKSDVP. A 3-methylthioaspartic acid modification is found at D89. A disordered region spans residues 104–124; sequence TAGVNDRRQGRSKYGAKRGKS. Basic residues predominate over residues 113–124; that stretch reads GRSKYGAKRGKS.

It belongs to the universal ribosomal protein uS12 family. As to quaternary structure, part of the 30S ribosomal subunit. Contacts proteins S8 and S17. May interact with IF1 in the 30S initiation complex.

Its function is as follows. With S4 and S5 plays an important role in translational accuracy. In terms of biological role, interacts with and stabilizes bases of the 16S rRNA that are involved in tRNA selection in the A site and with the mRNA backbone. Located at the interface of the 30S and 50S subunits, it traverses the body of the 30S subunit contacting proteins on the other side and probably holding the rRNA structure together. The combined cluster of proteins S8, S12 and S17 appears to hold together the shoulder and platform of the 30S subunit. The protein is Small ribosomal subunit protein uS12 of Hahella chejuensis (strain KCTC 2396).